The sequence spans 263 residues: Tryptophan synthase alpha chain (263 aa).

Active-site proton acceptor residues include Glu49 and Asp60.

The protein belongs to the TrpA family. As to quaternary structure, tetramer of two alpha and two beta chains.

It carries out the reaction (1S,2R)-1-C-(indol-3-yl)glycerol 3-phosphate + L-serine = D-glyceraldehyde 3-phosphate + L-tryptophan + H2O. Its pathway is amino-acid biosynthesis; L-tryptophan biosynthesis; L-tryptophan from chorismate: step 5/5. Its function is as follows. The alpha subunit is responsible for the aldol cleavage of indoleglycerol phosphate to indole and glyceraldehyde 3-phosphate. The chain is Tryptophan synthase alpha chain from Jannaschia sp. (strain CCS1).